Reading from the N-terminus, the 576-residue chain is Adenine deaminase (576 aa).

Belongs to the metallo-dependent hydrolases superfamily. Adenine deaminase family. The cofactor is Mn(2+).

The catalysed reaction is adenine + H2O + H(+) = hypoxanthine + NH4(+). The sequence is that of Adenine deaminase from Syntrophobacter fumaroxidans (strain DSM 10017 / MPOB).